A 278-amino-acid chain; its full sequence is Hydroxyethylthiazole kinase (278 aa).

Methionine 46 serves as a coordination point for substrate. ATP contacts are provided by arginine 122 and threonine 168. Glycine 195 is a binding site for substrate.

The protein belongs to the Thz kinase family. It depends on Mg(2+) as a cofactor.

The enzyme catalyses 5-(2-hydroxyethyl)-4-methylthiazole + ATP = 4-methyl-5-(2-phosphooxyethyl)-thiazole + ADP + H(+). It functions in the pathway cofactor biosynthesis; thiamine diphosphate biosynthesis; 4-methyl-5-(2-phosphoethyl)-thiazole from 5-(2-hydroxyethyl)-4-methylthiazole: step 1/1. Catalyzes the phosphorylation of the hydroxyl group of 4-methyl-5-beta-hydroxyethylthiazole (THZ). The polypeptide is Hydroxyethylthiazole kinase (Chloroflexus aggregans (strain MD-66 / DSM 9485)).